Consider the following 588-residue polypeptide: Ufm1-specific protease (588 aa).

Catalysis depends on residues C420, D544, and H546.

This sequence belongs to the peptidase C78 family. As to quaternary structure, interacts with odr-4.

Its subcellular location is the endoplasmic reticulum membrane. It is found in the cytoplasm. The protein resides in the perinuclear region. In terms of biological role, thiol protease which recognizes and hydrolyzes the peptide bond at the C-terminal Gly of ufm-1, a ubiquitin-like modifier protein bound to a number of target proteins. Required, with oct-4, for the localization of a subset of 7 transmembrane domain odorant receptors, including odr-10, to the cilia of olfactory neurons AWA and AWC. Operates in aggregation behavior, and responses to oxygen levels. In Caenorhabditis briggsae, this protein is Ufm1-specific protease.